The sequence spans 125 residues: Large ribosomal subunit protein bL12 (125 aa).

This sequence belongs to the bacterial ribosomal protein bL12 family. As to quaternary structure, homodimer. Part of the ribosomal stalk of the 50S ribosomal subunit. Forms a multimeric L10(L12)X complex, where L10 forms an elongated spine to which 2 to 4 L12 dimers bind in a sequential fashion. Binds GTP-bound translation factors.

Its function is as follows. Forms part of the ribosomal stalk which helps the ribosome interact with GTP-bound translation factors. Is thus essential for accurate translation. The protein is Large ribosomal subunit protein bL12 of Rickettsia felis (strain ATCC VR-1525 / URRWXCal2) (Rickettsia azadi).